We begin with the raw amino-acid sequence, 253 residues long: Transcription factor ORG2 (253 aa).

The 53-residue stretch at 71-123 (VKKLNHNASERDRRKKINTLFSSLRSCLPASDQSKKLSIPETVSKSLKYIPEL) folds into the bHLH domain.

Homodimer. As to expression, roots.

It localises to the nucleus. The sequence is that of Transcription factor ORG2 (ORG2) from Arabidopsis thaliana (Mouse-ear cress).